The chain runs to 119 residues: Ribonuclease (119 aa).

Substrate contacts are provided by Lys-6 and Arg-9. The Proton acceptor role is filled by His-11. Disulfide bonds link Cys-26–Cys-81, Cys-40–Cys-92, and Cys-58–Cys-107. Residues 41–45 (KFTNT) and Arg-82 contribute to the substrate site. The active-site Proton donor is His-114.

Belongs to the pancreatic ribonuclease family. As to quaternary structure, monomer. Interacts with and forms tight 1:1 complexes with RNH1. Dimerization of two such complexes may occur. Interaction with RNH1 inhibits this protein. Pancreas.

The protein resides in the secreted. The enzyme catalyses an [RNA] containing cytidine + H2O = an [RNA]-3'-cytidine-3'-phosphate + a 5'-hydroxy-ribonucleotide-3'-[RNA].. It carries out the reaction an [RNA] containing uridine + H2O = an [RNA]-3'-uridine-3'-phosphate + a 5'-hydroxy-ribonucleotide-3'-[RNA].. Functionally, endonuclease that catalyzes the cleavage of RNA on the 3' side of pyrimidine nucleotides. Acts on single-stranded and double-stranded RNA. The protein is Ribonuclease of Chelydra serpentina (Snapping turtle).